We begin with the raw amino-acid sequence, 215 residues long: FMN-dependent NADH:quinone oxidoreductase (215 aa).

Ser17–Ser19 is an FMN binding site.

The protein belongs to the azoreductase type 1 family. In terms of assembly, homodimer. The cofactor is FMN.

It catalyses the reaction 2 a quinone + NADH + H(+) = 2 a 1,4-benzosemiquinone + NAD(+). The catalysed reaction is N,N-dimethyl-1,4-phenylenediamine + anthranilate + 2 NAD(+) = 2-(4-dimethylaminophenyl)diazenylbenzoate + 2 NADH + 2 H(+). Its function is as follows. Quinone reductase that provides resistance to thiol-specific stress caused by electrophilic quinones. Functionally, also exhibits azoreductase activity. Catalyzes the reductive cleavage of the azo bond in aromatic azo compounds to the corresponding amines. The sequence is that of FMN-dependent NADH:quinone oxidoreductase from Clostridium botulinum (strain Alaska E43 / Type E3).